The primary structure comprises 109 residues: uncharacterized protein (109 aa).

This is an uncharacterized protein from Methanocaldococcus jannaschii (strain ATCC 43067 / DSM 2661 / JAL-1 / JCM 10045 / NBRC 100440) (Methanococcus jannaschii).